A 688-amino-acid chain; its full sequence is Beta-galactosidase BglY (688 aa).

Residue R118 participates in substrate binding. C122 is a binding site for Zn(2+). A substrate-binding site is contributed by N156. The Proton donor role is filled by E157. C162, C164, and C167 together coordinate Zn(2+). E313 acts as the Nucleophile in catalysis. Substrate contacts are provided by residues W321 and E361–H364.

Belongs to the glycosyl hydrolase 42 family.

The catalysed reaction is Hydrolysis of terminal non-reducing beta-D-galactose residues in beta-D-galactosides.. With respect to regulation, ca(2+), Mg(2+) and EDTA have little effect on enzyme activity at 1-10 mM. Zn(2+) at 3, 5, 7 or 10 mM inhibits activity by 20%, 30%, 40% and 65%, respectively. Hydrolyzes o-nitrophenyl-beta-D-galactopyranoside (ONPG) and p-nitrophenyl-beta-D-fucopyranoside (PNPF), but not p-nitrophenyl-beta-D-glucopyranoside (PNPG), p-nitrophenyl-beta-D-xylopyranoside (PNPX) or p-nitrophenyl-beta-D-arabinopyranoside (PNPA). Also hydrolyzes lactose, including lactose in milk. The chain is Beta-galactosidase BglY (bglY) from Alicyclobacillus acidocaldarius subsp. acidocaldarius (strain ATCC 27009 / DSM 446 / BCRC 14685 / JCM 5260 / KCTC 1825 / NBRC 15652 / NCIMB 11725 / NRRL B-14509 / 104-IA) (Bacillus acidocaldarius).